Here is a 359-residue protein sequence, read N- to C-terminus: Peptide chain release factor 1 (359 aa).

Q235 bears the N5-methylglutamine mark.

It belongs to the prokaryotic/mitochondrial release factor family. In terms of processing, methylated by PrmC. Methylation increases the termination efficiency of RF1.

It is found in the cytoplasm. Peptide chain release factor 1 directs the termination of translation in response to the peptide chain termination codons UAG and UAA. The sequence is that of Peptide chain release factor 1 from Verminephrobacter eiseniae (strain EF01-2).